The primary structure comprises 137 residues: MLDKLDGALRFQQEALNLRAQRQEILSANIANADTPGFQARDIDFSSQLQKVMEQGRVNGSGMSLSLTAARHIPAQNIQPPDLDLLFRVPDQPSMDGNTVDMDRERTNFADNSLKYQTDLTILGGQIKGMMSVLQQG.

This sequence belongs to the flagella basal body rod proteins family. In terms of assembly, the basal body constitutes a major portion of the flagellar organelle and consists of a number of rings mounted on a central rod. In Gram-negative bacteria, at least four rings, L, P, S and M are present, whereas Gram-positive bacteria lack the L and P rings. The rod consists of about 26 subunits of FlgG in the distal portion, and FlgB, FlgC and FlgF build up the proximal portion of the rod with about 6 subunits each. Rod assembly occurs by export via the flagellum-specific pathway of its constituent proteins and by their incorporation into the rod structure in the probable order of FlgB, FlgC, FlgF and FlgG. Another protein, FliE, also assembles onto the stable rod structure.

It is found in the bacterial flagellum basal body. Functionally, structural component of flagellum, the bacterial motility apparatus. Part of the rod structure of flagellar basal body. The sequence is that of Flagellar basal body rod protein FlgB from Yersinia ruckeri.